We begin with the raw amino-acid sequence, 131 residues long: Phosphomevalonate dehydratase small subunit (131 aa).

Catalysis depends on Ser62, which acts as the Proton acceptor.

Belongs to the AcnX type II small subunit family. Heterodimer composed of a large subunit (PMDh-L) and a small subunit (PMDh-S).

The catalysed reaction is (R)-5-phosphomevalonate = (2E)-3-methyl-5-phosphooxypent-2-enoate + H2O. It functions in the pathway isoprenoid biosynthesis; isopentenyl diphosphate biosynthesis via mevalonate pathway. Component of a hydro-lyase that catalyzes the dehydration of mevalonate 5-phosphate (MVA5P) to form trans-anhydromevalonate 5-phosphate (tAHMP). Involved in the archaeal mevalonate (MVA) pathway, which provides fundamental precursors for isoprenoid biosynthesis, such as isopentenyl diphosphate (IPP) and dimethylallyl diphosphate (DMAPP). In Thermococcus gammatolerans (strain DSM 15229 / JCM 11827 / EJ3), this protein is Phosphomevalonate dehydratase small subunit.